The sequence spans 407 residues: Glycolate oxidase iron-sulfur subunit (407 aa).

4Fe-4S ferredoxin-type domains follow at residues 14–47 and 66–95; these read RALE…ELDG and LKTQ…HNLL. Cys-25, Cys-28, Cys-31, Cys-35, Cys-75, Cys-78, Cys-81, and Cys-85 together coordinate [4Fe-4S] cluster.

The glycolate oxidase likely consists of three subunits, GlcD, GlcE and GlcF. [4Fe-4S] cluster serves as cofactor.

The protein resides in the cell inner membrane. The catalysed reaction is glycolate + A = glyoxylate + AH2. It catalyses the reaction (R)-lactate + A = pyruvate + AH2. With respect to regulation, in vitro the glycolate oxidase activity is inhibited by the sulfhydryl inhibitors CuSO4 and PCMB, by KCN, but not by the metal complexing agent EDTA. Component of a complex that catalyzes the oxidation of glycolate to glyoxylate. Is required for E.coli to grow on glycolate as a sole source of carbon. Is also able to oxidize D-lactate ((R)-lactate) with a similar rate. Does not link directly to O(2), and 2,6-dichloroindophenol (DCIP) and phenazine methosulfate (PMS) can act as artificial electron acceptors in vitro, but the physiological molecule that functions as a primary electron acceptor during glycolate oxidation is unknown. This chain is Glycolate oxidase iron-sulfur subunit, found in Escherichia coli (strain K12).